Consider the following 685-residue polypeptide: Putative lipase ROG1 (685 aa).

The Charge relay system role is filled by S269.

The protein belongs to the putative lipase ROG1 family.

The sequence is that of Putative lipase ROG1 (ROG1) from Saccharomyces cerevisiae (strain ATCC 204508 / S288c) (Baker's yeast).